A 133-amino-acid chain; its full sequence is Large ribosomal subunit protein uL22 (133 aa).

This sequence belongs to the universal ribosomal protein uL22 family. As to quaternary structure, part of the 50S ribosomal subunit.

This protein binds specifically to 23S rRNA; its binding is stimulated by other ribosomal proteins, e.g. L4, L17, and L20. It is important during the early stages of 50S assembly. It makes multiple contacts with different domains of the 23S rRNA in the assembled 50S subunit and ribosome. Functionally, the globular domain of the protein is located near the polypeptide exit tunnel on the outside of the subunit, while an extended beta-hairpin is found that lines the wall of the exit tunnel in the center of the 70S ribosome. The protein is Large ribosomal subunit protein uL22 of Granulibacter bethesdensis (strain ATCC BAA-1260 / CGDNIH1).